The primary structure comprises 270 residues: Acyl-[acyl-carrier-protein]--UDP-N-acetylglucosamine O-acyltransferase (270 aa).

It belongs to the transferase hexapeptide repeat family. LpxA subfamily. As to quaternary structure, homotrimer.

Its subcellular location is the cytoplasm. The catalysed reaction is a (3R)-hydroxyacyl-[ACP] + UDP-N-acetyl-alpha-D-glucosamine = a UDP-3-O-[(3R)-3-hydroxyacyl]-N-acetyl-alpha-D-glucosamine + holo-[ACP]. The protein operates within glycolipid biosynthesis; lipid IV(A) biosynthesis; lipid IV(A) from (3R)-3-hydroxytetradecanoyl-[acyl-carrier-protein] and UDP-N-acetyl-alpha-D-glucosamine: step 1/6. Functionally, involved in the biosynthesis of lipid A, a phosphorylated glycolipid that anchors the lipopolysaccharide to the outer membrane of the cell. The protein is Acyl-[acyl-carrier-protein]--UDP-N-acetylglucosamine O-acyltransferase of Sinorhizobium fredii (strain NBRC 101917 / NGR234).